Here is a 61-residue protein sequence, read N- to C-terminus: DNA-directed RNA polymerase subunit Rpo6 (61 aa).

Belongs to the archaeal Rpo6/eukaryotic RPB6 RNA polymerase subunit family. Part of the RNA polymerase complex.

The protein resides in the cytoplasm. It catalyses the reaction RNA(n) + a ribonucleoside 5'-triphosphate = RNA(n+1) + diphosphate. Functionally, DNA-dependent RNA polymerase (RNAP) catalyzes the transcription of DNA into RNA using the four ribonucleoside triphosphates as substrates. The polypeptide is DNA-directed RNA polymerase subunit Rpo6 (Thermoplasma acidophilum (strain ATCC 25905 / DSM 1728 / JCM 9062 / NBRC 15155 / AMRC-C165)).